The primary structure comprises 744 residues: Glucosamine inositolphosphorylceramide transferase 1 (744 aa).

Transmembrane regions (helical) follow at residues 31 to 51 (FLVA…WLVV), 378 to 398 (SLFG…VGFV), and 460 to 480 (LFFC…VHFL). Substrate contacts are provided by residues Asn534, 558 to 563 (NSLNNR), 579 to 581 (DDD), Arg609, and 665 to 669 (FNCED). Residue Asp581 coordinates Mn(2+). Cys667 and Cys718 are oxidised to a cystine. The active site involves Asp669.

Belongs to the glycosyltransferase 64 family. It depends on Mn(2+) as a cofactor. Highly expressed in almost all tissues.

The protein localises to the membrane. The protein operates within sphingolipid metabolism. Essential protein. Glycosyltransferase that mediates the glycosylation of glycosylinositol phosphorylceramides (GIPCs), the major sphingolipids in the plasma membrane; acts as a HexN(Ac)-specific GIPC sugar transferase. Responsible for the glycosylation of a subgroup of GIPCs found in seeds and pollen that contain GlcNAc and GlcN (GlcN(Ac)). Maybe involved in the maintenance of cell-cell adhesion. The sequence is that of Glucosamine inositolphosphorylceramide transferase 1 from Oryza sativa subsp. japonica (Rice).